A 310-amino-acid chain; its full sequence is HTH-type transcriptional activator TtdR (310 aa).

The HTH lysR-type domain maps to 6 to 63 (PLAKDLQVLVEIVHSGSFSAAAATLGQTPAFVTKRIQILENTLATTLLNRSARGVALT). Positions 23–42 (FSAAAATLGQTPAFVTKRIQ) form a DNA-binding region, H-T-H motif.

It belongs to the LysR transcriptional regulatory family.

Functionally, positive regulator required for L-tartrate-dependent anaerobic growth on glycerol. Induces expression of the ttdA-ttdB-ygjE operon. This Escherichia coli O6:K15:H31 (strain 536 / UPEC) protein is HTH-type transcriptional activator TtdR (ttdR).